Consider the following 444-residue polypeptide: tRNA modification GTPase MnmE (444 aa).

3 residues coordinate (6S)-5-formyl-5,6,7,8-tetrahydrofolate: Arg24, Glu81, and Lys121. Residues Gly218–Arg368 form the TrmE-type G domain. Residues Asn228–Thr233, Ser247–Thr253, Asp272–Gly275, and Ser349–Arg351 each bind GTP. Mg(2+) is bound by residues Ser232 and Thr253. Residue Lys444 coordinates (6S)-5-formyl-5,6,7,8-tetrahydrofolate.

Belongs to the TRAFAC class TrmE-Era-EngA-EngB-Septin-like GTPase superfamily. TrmE GTPase family. As to quaternary structure, homodimer. Heterotetramer of two MnmE and two MnmG subunits. K(+) is required as a cofactor.

Its subcellular location is the cytoplasm. Its function is as follows. Exhibits a very high intrinsic GTPase hydrolysis rate. Involved in the addition of a carboxymethylaminomethyl (cmnm) group at the wobble position (U34) of certain tRNAs, forming tRNA-cmnm(5)s(2)U34. This Bradyrhizobium sp. (strain ORS 278) protein is tRNA modification GTPase MnmE.